A 37-amino-acid polypeptide reads, in one-letter code: Large ribosomal subunit protein bL36c (37 aa).

It belongs to the bacterial ribosomal protein bL36 family.

The protein localises to the plastid. It localises to the chloroplast. The sequence is that of Large ribosomal subunit protein bL36c from Oltmannsiellopsis viridis (Marine flagellate).